Reading from the N-terminus, the 333-residue chain is Antimicrobial peptides (333 aa).

The N-terminal stretch at 1–23 is a signal peptide; the sequence is MVQKGVVFGVLLILFICSTLTSA. The segment at 23–52 is disordered; that stretch reads ADSKPNPTKEEEPAKKPDEVSVKSGGPEVS. A propeptide spans 24–54 (acidic peptide 1); sequence DSKPNPTKEEEPAKKPDEVSVKSGGPEVSED. Positions 29-43 are enriched in basic and acidic residues; it reads PTKEEEPAKKPDEVS. A Pyrrolidone carboxylic acid modification is found at Gln-55. 2 cysteine pairs are disulfide-bonded: Cys-60-Cys-70 and Cys-61-Cys-74. A propeptide spans 75-102 (acidic peptide 2); the sequence is ANAEEAAAAIPEASEELAQEEAPVYSED. Position 103 is a pyrrolidone carboxylic acid (Gln-103). 2 cysteine pairs are disulfide-bonded: Cys-108–Cys-118 and Cys-109–Cys-122. A propeptide spans 123–148 (acidic peptide 3); that stretch reads QNAEEAAAAIPEATEKAQEAPVYSED. At Gln-149 the chain carries Pyrrolidone carboxylic acid. 2 cysteine pairs are disulfide-bonded: Cys-154–Cys-164 and Cys-155–Cys-168. Positions 169–196 are cleaved as a propeptide — acidic peptide 4; the sequence is QNAEEAAAAVAIPEASEKAQEGPVYSED. Pyrrolidone carboxylic acid is present on Gln-197. Intrachain disulfides connect Cys-202-Cys-212 and Cys-203-Cys-216. Residues 217-232 constitute a propeptide, acidic peptide 5; that stretch reads SNAADEVATPEDVEPG. Position 233 is a pyrrolidone carboxylic acid (Gln-233). Cystine bridges form between Cys-238/Cys-248 and Cys-239/Cys-252. Positions 253-278 are cleaved as a propeptide — acidic peptide 6; the sequence is HNAAEEATLKAFEEEAAREQPVYSED. Gln-279 carries the post-translational modification Pyrrolidone carboxylic acid. 2 disulfides stabilise this stretch: Cys-284-Cys-294 and Cys-285-Cys-298. Positions 299–333 are cleaved as a propeptide — acidic peptide 7; sequence QSAEEAAAFQAGEVTASLMLIMFKACPCMGPVPSV.

The N-terminal of all peptides are blocked. In terms of processing, the 4 cysteine residues of all peptides are involved in intrachain disulfide bonds.

The protein resides in the secreted. Plays a role in the defense of the germinating seed against microorganisms, by inhibiting the growth of a range of filamentous fungi and bacteria, especially Gram-positive bacteria. Not cytotoxic for cultured human cells and are the smallest known plant-derived antimicrobial peptides. Peptide IB-AMP4 has a higher antifungal activity than IB-AMP1. This chain is Antimicrobial peptides (AMP), found in Impatiens balsamina (Balsam).